The primary structure comprises 720 residues: Serine/threonine-protein kinase KIN82 (720 aa).

Polar residues-rich tracts occupy residues 1–13 and 99–116; these read MTQQEYRSPSQRL and FNHNRSKSSGTTDASTSE. Disordered regions lie at residues 1 to 20 and 99 to 128; these read MTQQEYRSPSQRLSKGRSMS and FNHNRSKSSGTTDASTSEKGTHKREPRSTI. At serine 203 the chain carries Phosphoserine. The span at 230-241 shows a compositional bias: low complexity; sequence SPLANLSLSNSP. A disordered region spans residues 230 to 257; sequence SPLANLSLSNSPIDSPRKNSETRKDQIP. The segment covering 244–255 has biased composition (basic and acidic residues); the sequence is SPRKNSETRKDQ. Residues 324 to 602 enclose the Protein kinase domain; sequence FEKIRLLGQG…AADIKRHPFF (279 aa). ATP-binding positions include 330–338 and lysine 353; that span reads LGQGDVGKV. The active-site Proton acceptor is the aspartate 449.

Belongs to the protein kinase superfamily. Ser/Thr protein kinase family. KIN82 subfamily.

It carries out the reaction L-seryl-[protein] + ATP = O-phospho-L-seryl-[protein] + ADP + H(+). The enzyme catalyses L-threonyl-[protein] + ATP = O-phospho-L-threonyl-[protein] + ADP + H(+). Its function is as follows. Flippase activator that phosphorylates DFN1 and DFN2 and which is involved in the generation of phospholipid asymmetry in membranes by the inward translocation of phospholipids. In Saccharomyces cerevisiae (strain ATCC 204508 / S288c) (Baker's yeast), this protein is Serine/threonine-protein kinase KIN82 (KIN82).